Consider the following 617-residue polypeptide: Vacuolar protein sorting-associated protein 33B (617 aa).

At Ala-2 the chain carries N-acetylalanine.

Belongs to the STXBP/unc-18/SEC1 family. As to quaternary structure, interacts with RAB11A and VIPAS39. Interacts with RAB25. Associates with adapter protein complex 3 (AP-3), clathrin:AP-3 and clathrin:HGS complexes. In terms of assembly, (Microbial infection) Interacts with M.tuberculosis PtpA. In terms of processing, phosphorylated on tyrosine residues. (Microbial infection) Dephosphorylated by M.tuberculosis PtpA, which induces the reduction of host phagolysosome fusion in M.tuberculosis-infected macrophages. Ubiquitous; highly expressed in testis and low expression in the lung.

It localises to the late endosome membrane. It is found in the lysosome membrane. The protein localises to the early endosome. The protein resides in the cytoplasmic vesicle. Its subcellular location is the clathrin-coated vesicle. It localises to the recycling endosome. In terms of biological role, may play a role in vesicle-mediated protein trafficking to lysosomal compartments and in membrane docking/fusion reactions of late endosomes/lysosomes. Required for proper trafficking and targeting of the collagen-modifying enzyme lysyl hydroxylase 3 (LH3) to intracellular collagen. Mediates phagolysosomal fusion in macrophages. Proposed to be involved in endosomal maturation implicating VIPAS39. In epithelial cells, the VPS33B:VIPAS39 complex may play a role in the apical recycling pathway and in the maintenance of the apical-basolateral polarity. Seems to be involved in the sorting of specific cargos from the trans-Golgi network to alpha-granule-destined multivesicular bodies (MVBs) promoting MVBs maturation in megakaryocytes. The sequence is that of Vacuolar protein sorting-associated protein 33B (VPS33B) from Homo sapiens (Human).